A 340-amino-acid polypeptide reads, in one-letter code: 4-hydroxy-2-oxovalerate aldolase (340 aa).

Residues 4–255 (VVIHDPTLRD…ATGIDLYALL (252 aa)) form the Pyruvate carboxyltransferase domain. 12 to 13 (RD) is a binding site for substrate. Aspartate 13 contacts Mn(2+). Histidine 16 acts as the Proton acceptor in catalysis. The substrate site is built by serine 166 and histidine 194. Mn(2+)-binding residues include histidine 194 and histidine 196.

This sequence belongs to the 4-hydroxy-2-oxovalerate aldolase family.

The enzyme catalyses (S)-4-hydroxy-2-oxopentanoate = acetaldehyde + pyruvate. In Streptomyces griseus subsp. griseus (strain JCM 4626 / CBS 651.72 / NBRC 13350 / KCC S-0626 / ISP 5235), this protein is 4-hydroxy-2-oxovalerate aldolase.